The primary structure comprises 364 residues: Esculetin O-methyltransferase (364 aa).

A bergaptol-binding site is contributed by Asn-132. Residues Gly-209, Asp-232, Asp-252, Met-253, Met-265, and Lys-266 each coordinate S-adenosyl-L-homocysteine. His-270 serves as a coordination point for bergaptol. Catalysis depends on His-270, which acts as the Proton acceptor.

The protein belongs to the class I-like SAM-binding methyltransferase superfamily. Cation-independent O-methyltransferase family. COMT subfamily. In terms of assembly, homodimer. In terms of tissue distribution, expressed ubiquitously.

The catalysed reaction is bergaptol + S-adenosyl-L-methionine = bergapten + S-adenosyl-L-homocysteine. The enzyme catalyses xanthotoxol + S-adenosyl-L-methionine = xanthotoxin + S-adenosyl-L-homocysteine + H(+). It catalyses the reaction esculetin + S-adenosyl-L-methionine = isoscopoletin + S-adenosyl-L-homocysteine + H(+). It carries out the reaction esculetin + S-adenosyl-L-methionine = scopoletin + S-adenosyl-L-homocysteine + H(+). The protein operates within aromatic compound metabolism. It functions in the pathway secondary metabolite biosynthesis. Inhibited by zinc Zn(2+), copper Cu(2+) and silver Ag(+) ions. In terms of biological role, O-methyltransferase involved in the biosynthesis of methoxylated coumarins natural products such as isoscopoletin, scopoletin, xanthotoxin and bergapten, photosensitizers used for medical purpose such as treating psoriasis and vitiligo or facilitating resistance to microbial infection and other stresses. Catalyzes the methylation of esculetin, bergaptol and xanthotoxol, but seems inactive on scopoletin and isoscopoletin. The protein is Esculetin O-methyltransferase of Kitagawia praeruptora (Peucedanum praeruptorum).